The sequence spans 351 residues: GTPase Obg (351 aa).

In terms of domain architecture, Obg spans 1 to 159 (MKFLDQAKVY…RWIWLRLKLI (159 aa)). An OBG-type G domain is found at 160–328 (ADVGLVGLPN…LCGSAWDIVL (169 aa)). GTP is bound by residues 166–173 (GLPNAGKS), 191–195 (FTTLY), 213–216 (DIPG), 280–283 (NKID), and 309–311 (SGV). Mg(2+) contacts are provided by serine 173 and threonine 193.

Belongs to the TRAFAC class OBG-HflX-like GTPase superfamily. OBG GTPase family. As to quaternary structure, monomer. Mg(2+) serves as cofactor.

The protein resides in the cytoplasm. In terms of biological role, an essential GTPase which binds GTP, GDP and possibly (p)ppGpp with moderate affinity, with high nucleotide exchange rates and a fairly low GTP hydrolysis rate. Plays a role in control of the cell cycle, stress response, ribosome biogenesis and in those bacteria that undergo differentiation, in morphogenesis control. In Maricaulis maris (strain MCS10) (Caulobacter maris), this protein is GTPase Obg.